Reading from the N-terminus, the 322-residue chain is uncharacterized protein (322 aa).

This is an uncharacterized protein from Acanthamoeba polyphaga mimivirus (APMV).